The chain runs to 393 residues: Sedoheptulose-1,7-bisphosphatase, chloroplastic (393 aa).

Residues Cys115 and Cys120 are joined by a disulfide bond. Asp126, Glu155, Asp176, Leu178, and Asp179 together coordinate Mg(2+). Substrate-binding positions include Asp179 to Ser182, Tyr290, and Lys320. Glu326 contributes to the Mg(2+) binding site.

Belongs to the FBPase class 1 family. Homodimer. Requires Mg(2+) as cofactor.

It localises to the plastid. The protein localises to the chloroplast. The enzyme catalyses D-sedoheptulose 1,7-bisphosphate + H2O = D-sedoheptulose 7-phosphate + phosphate. It functions in the pathway carbohydrate biosynthesis; Calvin cycle. The chain is Sedoheptulose-1,7-bisphosphatase, chloroplastic from Triticum aestivum (Wheat).